A 455-amino-acid chain; its full sequence is Hexokinase-2 (455 aa).

The Hexokinase domain occupies 3 to 445 (ANFQQAVKKL…SGIGAALCAL (443 aa)). A hexokinase small subdomain region spans residues 57-195 (TGAETGDFLA…NLPIRIEAVI (139 aa)). 68 to 73 (DFGGTN) is a binding site for ATP. Substrate is bound by residues 144 to 145 (SY), 161 to 162 (TK), and 196 to 197 (ND). The tract at residues 196–434 (NDTVGTLVTR…KLISIGIAKD (239 aa)) is hexokinase large subdomain. Position 222 (Thr-222) interacts with ATP. Residues Asn-225, Glu-252, and Glu-283 each contribute to the substrate site. ATP is bound by residues 288–289 (GM), 325–329 (TSVLS), and 400–404 (SLVEH).

The protein belongs to the hexokinase family. As to quaternary structure, monomer.

It catalyses the reaction a D-hexose + ATP = a D-hexose 6-phosphate + ADP + H(+). It carries out the reaction D-mannose + ATP = D-mannose 6-phosphate + ADP + H(+). The enzyme catalyses D-fructose + ATP = D-fructose 6-phosphate + ADP + H(+). The catalysed reaction is D-glucose + ATP = D-glucose 6-phosphate + ADP + H(+). It participates in carbohydrate metabolism; hexose metabolism. It functions in the pathway carbohydrate degradation; glycolysis; D-glyceraldehyde 3-phosphate and glycerone phosphate from D-glucose: step 1/4. Its function is as follows. Catalyzes the phosphorylation of hexose (six-carbon sugars) to hexose 6-phosphate. Phosphorylates D-glucose, D-fructose and D-mannose. Compared to hxk1, has a much higher affinity for D-glucose. Constitutes the initial enzyme of glycolysis by catalyzing the phosphorylation of glucose to D-glucose 6-phosphate. The chain is Hexokinase-2 from Schizosaccharomyces pombe (strain 972 / ATCC 24843) (Fission yeast).